Consider the following 353-residue polypeptide: Fe(3+) ions import ATP-binding protein FbpC (353 aa).

Residues valine 9–methionine 239 enclose the ABC transporter domain. Glycine 41–threonine 48 contacts ATP.

It belongs to the ABC transporter superfamily. Fe(3+) ion importer (TC 3.A.1.10) family. As to quaternary structure, the complex is composed of two ATP-binding proteins (FbpC), two transmembrane proteins (FbpB) and a solute-binding protein (FbpA).

The protein localises to the cell inner membrane. It carries out the reaction Fe(3+)(out) + ATP + H2O = Fe(3+)(in) + ADP + phosphate + H(+). Functionally, part of the ABC transporter complex FbpABC involved in Fe(3+) ions import. Responsible for energy coupling to the transport system. The polypeptide is Fe(3+) ions import ATP-binding protein FbpC (Brucella melitensis biotype 1 (strain ATCC 23456 / CCUG 17765 / NCTC 10094 / 16M)).